Here is a 421-residue protein sequence, read N- to C-terminus: O-acetyl-L-homoserine sulfhydrylase 1 (421 aa).

Lysine 206 bears the N6-(pyridoxal phosphate)lysine mark.

The protein belongs to the trans-sulfuration enzymes family. As to quaternary structure, homotetramer. It depends on pyridoxal 5'-phosphate as a cofactor.

It carries out the reaction O-acetyl-L-homoserine + hydrogen sulfide = L-homocysteine + acetate. Its pathway is amino-acid biosynthesis; L-methionine biosynthesis via de novo pathway; L-homocysteine from O-acetyl-L-homoserine: step 1/1. Its activity is regulated as follows. Inhibited by the carbonyl reagents hydroxylamine and phenylhydrazine. Also inhibited by methionine and propargylglycine. Its function is as follows. Catalyzes the conversion of O-acetyl-L-homoserine (OAH) into homocysteine in the methionine biosynthesis pathway. Has weak activity with O-acetyl-L-serine, O-phospho-L-serine, L-serine, O-succinyl-L-homoserine and L-homoserine. Shows low CTT beta-lyase activity and very low CTT gamma-synthase activity. In Thermus thermophilus (strain ATCC 27634 / DSM 579 / HB8), this protein is O-acetyl-L-homoserine sulfhydrylase 1.